The primary structure comprises 206 residues: Large ribosomal subunit protein uL22m (206 aa).

Residues 1-40 (MAAAVLGQLGALWIHNLRSRGRLAWGVLPQSYVHTSASLD) constitute a mitochondrion transit peptide.

It belongs to the universal ribosomal protein uL22 family. In terms of assembly, component of the mitochondrial ribosome large subunit (39S) which comprises a 16S rRNA and about 50 distinct proteins.

Its subcellular location is the mitochondrion. The protein is Large ribosomal subunit protein uL22m (MRPL22) of Pongo abelii (Sumatran orangutan).